The sequence spans 198 residues: Probable GTP-binding protein EngB (198 aa).

The EngB-type G domain occupies 22-195 (HRNEVAFVGR…IDKLFLEFAT (174 aa)). GTP is bound by residues 30-37 (GRSNVGKS), 57-61 (GKTRL), 75-78 (DLPG), 142-145 (TKSD), and 174-176 (YSS). Mg(2+) is bound by residues Ser-37 and Thr-59.

Belongs to the TRAFAC class TrmE-Era-EngA-EngB-Septin-like GTPase superfamily. EngB GTPase family. The cofactor is Mg(2+).

Its function is as follows. Necessary for normal cell division and for the maintenance of normal septation. The chain is Probable GTP-binding protein EngB from Clostridium botulinum (strain Eklund 17B / Type B).